We begin with the raw amino-acid sequence, 485 residues long: Glutamyl-tRNA(Gln) amidotransferase subunit A (485 aa).

Active-site charge relay system residues include Lys-78 and Ser-153. Ser-177 functions as the Acyl-ester intermediate in the catalytic mechanism.

It belongs to the amidase family. GatA subfamily. Heterotrimer of A, B and C subunits.

It catalyses the reaction L-glutamyl-tRNA(Gln) + L-glutamine + ATP + H2O = L-glutaminyl-tRNA(Gln) + L-glutamate + ADP + phosphate + H(+). Functionally, allows the formation of correctly charged Gln-tRNA(Gln) through the transamidation of misacylated Glu-tRNA(Gln) in organisms which lack glutaminyl-tRNA synthetase. The reaction takes place in the presence of glutamine and ATP through an activated gamma-phospho-Glu-tRNA(Gln). This chain is Glutamyl-tRNA(Gln) amidotransferase subunit A, found in Bacillus cereus (strain ATCC 10987 / NRS 248).